A 651-amino-acid chain; its full sequence is ATP synthase F(1) complex catalytic subunit beta, mitochondrial (651 aa).

A mitochondrion-targeting transit peptide spans 1-30 (MFVARRLSKNITQISKTAVKTSVRAVPVRG). 6 residues coordinate ADP: G259, V260, G261, K262, T263, and V264. Position 259 (G259) interacts with ATP. Residues G259, V260, G261, K262, and T263 each coordinate phosphate. G261, K262, T263, and V264 together coordinate ATP. Residue T263 coordinates Mg(2+). Residue E288 participates in Mg(2+) binding. R289 contributes to the ATP binding site.

This sequence belongs to the ATPase alpha/beta chains family. In terms of assembly, homotrimer. Component of the ATP synthase complex composed at least of ATP5F1A/subunit alpha, ATP5F1B/subunit beta, ATP5MC1/subunit c (homooctomer), MT-ATP6/subunit a, MT-ATP8/subunit 8, ATP5ME/subunit e, ATP5MF/subunit f, ATP5MG/subunit g, ATP5MK/subunit k, ATP5MJ/subunit j, ATP5F1C/subunit gamma, ATP5F1D/subunit delta, ATP5F1E/subunit epsilon, ATP5PF/subunit F6, ATP5PB/subunit b, ATP5PD/subunit d, ATP5PO/subunit OSCP. ATP synthase complex consists of a soluble F(1) head domain (subunits alpha(3) and beta(3)) - the catalytic core - and a membrane F(0) domain - the membrane proton channel (subunits c, a, 8, e, f, g, k and j). These two domains are linked by a central stalk (subunits gamma, delta, and epsilon) rotating inside the F1 region and a stationary peripheral stalk (subunits F6, b, d, and OSCP).

It localises to the mitochondrion inner membrane. The enzyme catalyses ATP + H2O + 4 H(+)(in) = ADP + phosphate + 5 H(+)(out). Catalytic subunit beta, of the mitochondrial membrane ATP synthase complex (F(1)F(0) ATP synthase or Complex V) that produces ATP from ADP in the presence of a proton gradient across the membrane which is generated by electron transport complexes of the respiratory chain. ATP synthase complex consist of a soluble F(1) head domain - the catalytic core - and a membrane F(1) domain - the membrane proton channel. These two domains are linked by a central stalk rotating inside the F(1) region and a stationary peripheral stalk. During catalysis, ATP synthesis in the catalytic domain of F(1) is coupled via a rotary mechanism of the central stalk subunits to proton translocation. In vivo, can only synthesize ATP although its ATP hydrolase activity can be activated artificially in vitro. With the subunit alpha (ATP5F1A), forms the catalytic core in the F(1) domain. This Dictyostelium discoideum (Social amoeba) protein is ATP synthase F(1) complex catalytic subunit beta, mitochondrial.